Consider the following 347-residue polypeptide: 3-isopropylmalate dehydrogenase (347 aa).

NAD(+) is bound at residue 76–87 (GPKWTDPNNRPE). Residues R94, R104, R132, and D217 each contribute to the substrate site. Mg(2+) is bound by residues D217, D241, and D245. Residue 275 to 287 (GSAPDIANEDKAN) participates in NAD(+) binding.

The protein belongs to the isocitrate and isopropylmalate dehydrogenases family. LeuB type 1 subfamily. In terms of assembly, homodimer. It depends on Mg(2+) as a cofactor. The cofactor is Mn(2+).

It is found in the cytoplasm. It carries out the reaction (2R,3S)-3-isopropylmalate + NAD(+) = 4-methyl-2-oxopentanoate + CO2 + NADH. It functions in the pathway amino-acid biosynthesis; L-leucine biosynthesis; L-leucine from 3-methyl-2-oxobutanoate: step 3/4. Its function is as follows. Catalyzes the oxidation of 3-carboxy-2-hydroxy-4-methylpentanoate (3-isopropylmalate) to 3-carboxy-4-methyl-2-oxopentanoate. The product decarboxylates to 4-methyl-2 oxopentanoate. This chain is 3-isopropylmalate dehydrogenase, found in Staphylococcus epidermidis (strain ATCC 35984 / DSM 28319 / BCRC 17069 / CCUG 31568 / BM 3577 / RP62A).